The chain runs to 287 residues: 3-hydroxyanthranilate 3,4-dioxygenase (287 aa).

The domain A (catalytic) stretch occupies residues 1 to 163 (MTNQSLHVNI…SKENETGKPD (163 aa)). R46 serves as a coordination point for O2. 3 residues coordinate Fe cation: H50, E56, and H94. E56 contributes to the substrate binding site. Residues R98 and E108 each coordinate substrate. The segment at 164–180 (PANPIKPAPYPLNTMNV) is linker. A domain B region spans residues 181-287 (MTPFSFREWV…AQDPDRKRPY (107 aa)).

The protein belongs to the 3-HAO family. In terms of assembly, monomer. Fe(2+) serves as cofactor.

It is found in the cytoplasm. It localises to the cytosol. It carries out the reaction 3-hydroxyanthranilate + O2 = (2Z,4Z)-2-amino-3-carboxymuconate 6-semialdehyde. Its pathway is cofactor biosynthesis; NAD(+) biosynthesis; quinolinate from L-kynurenine: step 3/3. Functionally, catalyzes the oxidative ring opening of 3-hydroxyanthranilate to 2-amino-3-carboxymuconate semialdehyde, which spontaneously cyclizes to quinolinate. The chain is 3-hydroxyanthranilate 3,4-dioxygenase (haao) from Danio rerio (Zebrafish).